Here is a 145-residue protein sequence, read N- to C-terminus: Class I hydrophobin 1 (145 aa).

An N-terminal signal peptide occupies residues M1–S18. Cystine bridges form between C88-C118, C95-C112, C96-C106, and C119-C128. N-linked (GlcNAc...) asparagine glycosylation occurs at N108.

The protein belongs to the fungal hydrophobin family. As to quaternary structure, self-assembles to form functional amyloid fibrils called rodlets. Self-assembly into fibrillar rodlets occurs spontaneously at hydrophobic:hydrophilic interfaces and the rodlets further associate laterally to form amphipathic monolayers.

The protein localises to the secreted. Its subcellular location is the cell wall. Aerial growth, conidiation, and dispersal of filamentous fungi in the environment rely upon a capability of their secreting small amphipathic proteins called hydrophobins (HPBs) with low sequence identity. Class I can self-assemble into an outermost layer of rodlet bundles on aerial cell surfaces, conferring cellular hydrophobicity that supports fungal growth, development and dispersal; whereas Class II form highly ordered films at water-air interfaces through intermolecular interactions but contribute nothing to the rodlet structure. Hyd1 is a class I hydrophobin that is involved in plant root attachment and colonization, and that might also protect the growing hyphae from locally synthesized plant defense compounds during the first stages of cucumber interaction, allowing this opportunistic, non-pathogenic fungus to colonize the intercellular spaces of the plant root. The polypeptide is Class I hydrophobin 1 (Trichoderma asperellum (Filamentous fungus)).